We begin with the raw amino-acid sequence, 336 residues long: MAAPILDPNAPAFTRRYMNLADPRLGAKALFASDEFFAPKERMLDPEPAVFIPGKYDDHGKWMDGWETRRKRTTGHDFCVVRLARPGVVYGVDLDTSHFTGNFPPAASIDACVSDADTPPDDAVWETLVPATTLAGNQHHYVDVSNPRAYTHLRVNLYPDGGLARLRVYGQPQRDWSRAARGELVDLAAIENGAYLVAANNEHFGPASRMLMPGRGANMGDGWETRRRREPGNDWAIVALARPGVIRRVEVDTAHFKGNFPDRCSLQAARVAGGTDASLVTQAMFWPMLLGEQPLGMDSVHTFETQLAALGPVTHVRLNIHPDGGVSRLRLWGELA.

The protein belongs to the allantoicase family.

It catalyses the reaction allantoate + H2O = (S)-ureidoglycolate + urea. It functions in the pathway nitrogen metabolism; (S)-allantoin degradation; (S)-ureidoglycolate from allantoate (aminidohydrolase route): step 1/1. The sequence is that of Probable allantoicase 2 from Burkholderia pseudomallei (strain K96243).